The chain runs to 948 residues: Isoleucine--tRNA ligase (948 aa).

The short motif at Pro-58–His-68 is the 'HIGH' region element. Residue Glu-566 participates in L-isoleucyl-5'-AMP binding. Positions Lys-607–Ser-611 match the 'KMSKS' region motif. ATP is bound at residue Lys-610. Zn(2+) contacts are provided by Cys-911, Cys-914, Cys-931, and Cys-934.

It belongs to the class-I aminoacyl-tRNA synthetase family. IleS type 1 subfamily. Monomer. It depends on Zn(2+) as a cofactor.

The protein localises to the cytoplasm. The catalysed reaction is tRNA(Ile) + L-isoleucine + ATP = L-isoleucyl-tRNA(Ile) + AMP + diphosphate. Catalyzes the attachment of isoleucine to tRNA(Ile). As IleRS can inadvertently accommodate and process structurally similar amino acids such as valine, to avoid such errors it has two additional distinct tRNA(Ile)-dependent editing activities. One activity is designated as 'pretransfer' editing and involves the hydrolysis of activated Val-AMP. The other activity is designated 'posttransfer' editing and involves deacylation of mischarged Val-tRNA(Ile). This Vibrio vulnificus (strain YJ016) protein is Isoleucine--tRNA ligase.